A 225-amino-acid polypeptide reads, in one-letter code: Ethylene-responsive transcription factor 3 (225 aa).

Low complexity predominate over residues 1–12 (MRRGRAAAAPAP). 2 disordered regions span residues 1–29 (MRRG…IRFR) and 82–193 (NFPL…NIAS). The segment at residues 27–84 (RFRGVRKRPWGRFAAEIRDPWKKTRVWLGTFDSAEDAARAYDAAARALRGPKAKTNFP) is a DNA-binding region (AP2/ERF). Residues 118-134 (SQRPTSSSMSSTVESFS) are compositionally biased toward low complexity. Residues 176–185 (DHGDCEKEND) show a composition bias toward basic and acidic residues. An EAR-like (transcriptional repression) motif is present at residues 202-208 (FDLNLPP).

This sequence belongs to the ethylene-response factor family. Class 2 subfamily.

It localises to the nucleus. Functionally, transcription factor that binds to the GCC-box pathogenesis-related promoter element. Involved in the regulation of gene expression by stress factors and by components of stress signal transduction pathways. Probably acts as a transcriptional repressor and may regulate other AtERFs. This Nicotiana tabacum (Common tobacco) protein is Ethylene-responsive transcription factor 3 (ERF3).